A 118-amino-acid polypeptide reads, in one-letter code: Large ribosomal subunit protein uL18 (118 aa).

It belongs to the universal ribosomal protein uL18 family. As to quaternary structure, part of the 50S ribosomal subunit; part of the 5S rRNA/L5/L18/L25 subcomplex. Contacts the 5S and 23S rRNAs.

This is one of the proteins that bind and probably mediate the attachment of the 5S RNA into the large ribosomal subunit, where it forms part of the central protuberance. This chain is Large ribosomal subunit protein uL18, found in Parvibaculum lavamentivorans (strain DS-1 / DSM 13023 / NCIMB 13966).